The sequence spans 432 residues: MTLWVLGLNHQTAPVDLRERAAFAGDALPRALDSLRTLPQVREAALLSTCNRTELYAMADDPQTLVAWLDMHAPGLSGYLYQHRDAEAVRHLFRVATGLDSMVLGEPQILGQVKDAWAVARAHGALGSGLDRLFQQTFSVAKRARTDTRVGANPVSVASTAVRLAQESFARLNESTVLLVGAGETIELAAKHLSEGRVRRLLIANRTLAHAQTLATQHGGVALPLTELDRHLAEADVVFSATAAREPVVTRVQVEQALRTRKRKPMLLFDLAVPRDIEASVAELSDAYLYTVDDLERAVEDNRRSRREAADQAEAIIDLQVARYVETLQANERQAPLKRLRAFGDSTRDELLAKARQQLSNGKPADEVLEQLAHALTNRLLHPPTAALRDAALNNDLDLTSAADRLFPEKPGYRHPPVATPIVRTDDANPAP.

Residues 49 to 52 (TCNR), Ser-101, 106 to 108 (EPQ), and Gln-112 contribute to the substrate site. The Nucleophile role is filled by Cys-50. Residue 181–186 (GAGETI) coordinates NADP(+). A disordered region spans residues 408–432 (PEKPGYRHPPVATPIVRTDDANPAP).

This sequence belongs to the glutamyl-tRNA reductase family. As to quaternary structure, homodimer.

The enzyme catalyses (S)-4-amino-5-oxopentanoate + tRNA(Glu) + NADP(+) = L-glutamyl-tRNA(Glu) + NADPH + H(+). Its pathway is porphyrin-containing compound metabolism; protoporphyrin-IX biosynthesis; 5-aminolevulinate from L-glutamyl-tRNA(Glu): step 1/2. Catalyzes the NADPH-dependent reduction of glutamyl-tRNA(Glu) to glutamate 1-semialdehyde (GSA). The polypeptide is Glutamyl-tRNA reductase (Xanthomonas campestris pv. campestris (strain B100)).